Here is a 362-residue protein sequence, read N- to C-terminus: MPGSAAARPLRAVKIWLGAIAALIAAMVLVGGATRLTESGLSIVEWKPITGTLPPLTDAQWAQAFEGYKTIPQYRELNAGMSLSEFKTIFWWEWSHRLLGRVIGLAYLLPFLWFIWRGHLGGELKRRLWLIFGLGALQGAVGWWMVASGLSQRVEVAQERLAIHLTLALVIFAAIVWTLRRLDERPVGAVPLRLRITAAALLALTFVQIFFGALVAGLRAGKLYNTWPTIDGALIPSAERLWFQEPWWRNLFDNHLTVQFDHRMLAYALWALAIAHAIDAVRARAGAAARGAVWFAAALTLQAALGIFTLLYEVPIGLALAHQAVAVLVLMLGVLQLERLWPRASASAANLPKSAMAAASRN.

5 consecutive transmembrane segments (helical) span residues 12–32, 102–122, 128–148, 159–179, and 198–218; these read AVKI…LVGG, VIGL…HLGG, LWLI…MVAS, ERLA…VWTL, and AAAL…VAGL. His-262 lines the heme pocket. Helical transmembrane passes span 264–286, 291–311, and 314–334; these read MLAY…ARAG, GAVW…FTLL, and VPIG…MLGV. His-322 contributes to the heme binding site.

Belongs to the COX15/CtaA family. Type 2 subfamily. In terms of assembly, interacts with CtaB. Requires heme b as cofactor.

Its subcellular location is the cell membrane. It carries out the reaction Fe(II)-heme o + 2 A + H2O = Fe(II)-heme a + 2 AH2. Its pathway is porphyrin-containing compound metabolism; heme A biosynthesis; heme A from heme O: step 1/1. In terms of biological role, catalyzes the conversion of heme O to heme A by two successive hydroxylations of the methyl group at C8. The first hydroxylation forms heme I, the second hydroxylation results in an unstable dihydroxymethyl group, which spontaneously dehydrates, resulting in the formyl group of heme A. The chain is Heme A synthase from Rhodopseudomonas palustris (strain BisA53).